The following is a 578-amino-acid chain: Telomere repeat-binding protein 1 (578 aa).

Residues 293 to 372 (VKLRIKSFRV…HLDSLDFSLE (80 aa)) form the Ubiquitin-like domain. Residues 440–467 (ELSSQSQPPSRKSRRSEQQQQQAAQRRI) are disordered. Positions 463-522 (AQRRIRRPFSVAEVEALVQAVEKLGTGRWRDVKLCAFEDADHRTYVDLKDKWKTLVHTAK) constitute an HTH myb-type domain. Interaction with DNA regions lie at residues 465-469 (RRIRR), 511-515 (KDKWK), and 522-529 (KISPQQRR). Positions 491-518 (WRDVKLCAFEDADHRTYVDLKDKWKTLV) form a DNA-binding region, H-T-H motif.

As to quaternary structure, homodimer and heterodimer with TRP2 and TRP3. Interacts with KU70. Expressed ubiquitously. Highest expression in flowers and leaves.

The protein localises to the nucleus. Functionally, binds specifically to the plant telomeric double-stranded DNA sequences 5'-GGTTTAG-3'. At least 4 repeats of telomeric sequences are required for binding. Induces DNA bending. The protein is Telomere repeat-binding protein 1 (TRP1) of Arabidopsis thaliana (Mouse-ear cress).